Consider the following 1051-residue polypeptide: Serine/threonine-protein kinase ULK1 (1051 aa).

In terms of domain architecture, Protein kinase spans 16 to 278 (FSRKDLIGHG…FDEFFHHPFL (263 aa)). ATP contacts are provided by residues 22–30 (IGHGAFAVV) and Lys-46. Asp-138 functions as the Proton acceptor in the catalytic mechanism. Lys-162 carries the N6-acetyllysine modification. Disordered regions lie at residues 283–323 (PIKK…EMPQ), 335–358 (AGFL…DDFV), and 394–554 (GLES…CRLH). The interaction with GABARAP and GABARAPL2 stretch occupies residues 287–416 (SPPVPVPSYP…TCSSSPSPSG (130 aa)). 3 stretches are compositionally biased toward low complexity: residues 295–318 (YPSS…PPSL), 340–349 (GSRDSGGSSK), and 400–423 (RTPS…PFSS). Position 317 is a phosphoserine; by AMPK (Ser-317). A phosphoserine mark is found at Ser-403 and Ser-450. Polar residues predominate over residues 437-459 (QVHNYQRIEQNLQSPTQQQTARS). Thr-456 is modified (phosphothreonine). A phosphoserine mark is found at Ser-467, Ser-477, Ser-479, and Ser-521. Position 555 is a phosphoserine; by AMPK (Ser-555). Residue Thr-574 is modified to Phosphothreonine. Position 606 is an N6-acetyllysine (Lys-606). A Phosphothreonine modification is found at Thr-635. Ser-637 is subject to Phosphoserine; by AMPK. A Phosphoserine modification is found at Ser-638. Disordered regions lie at residues 661–686 (PDLS…DTRG) and 727–787 (APSA…TGSS). Residues 731 to 745 (GFGGTLHPGARGGGA) show a composition bias toward gly residues. Ser-757 carries the phosphoserine; by MTOR modification. Ser-774 is subject to Phosphoserine. The span at 774–787 (SVGSSSSLGSTGSS) shows a compositional bias: low complexity. Residue Ser-777 is modified to Phosphoserine; by AMPK. Residues 829-1051 (PDLPEETLME…LSALLSGVYA (223 aa)) are C-terminal domain; mediates interaction with SESN2.

Belongs to the protein kinase superfamily. Ser/Thr protein kinase family. APG1/unc-51/ULK1 subfamily. As to quaternary structure, interacts with GABARAP and GABARAPL2. Interacts (via C-terminus) with ATG13. Part of a complex consisting of ATG13, ATG101, ULK1 and RB1CC1. Associates with the mammalian target of rapamycin complex 1 (mTORC1) through an interaction with RPTOR; the association depends on nutrient conditions and is reduced during starvation. Interacts with FEZ1; SCOC interferes with FEZ1-binding. Interacts with TBC1D14. Interacts (phosphorylated form) with TRIM5. When phosphorylated at Ser-317, interacts with MEFV and BECN1 simultaneously. Interacts with TRIM21 and IRF3, in the presence of TRIM21. Interacts with SESN2. Interacts with SQSTM1. Interacts with C9orf72. Interacts with WDR45. Interacts with ATG13; this interaction is increased in the absence of TMEM39A. Interacts with WIPI2. Interacts with ATP2A2. Interacts with AMBRA1. Interacts with Irgm1; promoting the coassembly of ULK1 and BECN1. In terms of processing, autophosphorylated. Phosphorylated under nutrient-rich conditions; dephosphorylated during starvation or following treatment with rapamycin. In response to nutrient limitation, phosphorylated and activated by AMPK, leading to activate autophagy. Under nutrient sufficiency, phosphorylated by MTOR/mTOR, disrupting the interaction with AMPK and preventing activation of ULK1. Post-translationally, ubiquitinated via 'Lys-63'-linkage by a complex composed of AMBRA1 and TRAF6 following autophagy induction, promoting ULK1 stability and kinase activity. Deubiquitinated by USP20; leading to ULK1 stability and autophagy initiation. Acetylated by KAT5/TIP60 under autophagy induction, promoting protein kinase activity.

It is found in the cytoplasm. The protein resides in the cytosol. Its subcellular location is the preautophagosomal structure. It carries out the reaction L-seryl-[protein] + ATP = O-phospho-L-seryl-[protein] + ADP + H(+). The enzyme catalyses L-threonyl-[protein] + ATP = O-phospho-L-threonyl-[protein] + ADP + H(+). With respect to regulation, acetylation by KAT5/TIP60 stimulates the protein kinase activity. The protein kinase activity is activated by unanchored 'Lys-63'-linked polyubiquitin chains: unanchored 'Lys-63'-linked polyubiquitin chains are catalyzed by TRIM32 in an AMBRA1-dependent manner. Serine/threonine-protein kinase involved in autophagy in response to starvation. Acts upstream of phosphatidylinositol 3-kinase PIK3C3 to regulate the formation of autophagophores, the precursors of autophagosomes. Part of regulatory feedback loops in autophagy: acts both as a downstream effector and negative regulator of mammalian target of rapamycin complex 1 (mTORC1) via interaction with RPTOR. Activated via phosphorylation by AMPK and also acts as a regulator of AMPK by mediating phosphorylation of AMPK subunits PRKAA1, PRKAB2 and PRKAG1, leading to negatively regulate AMPK activity. May phosphorylate ATG13/KIAA0652 and RPTOR; however such data need additional evidences. Plays a role early in neuronal differentiation and is required for granule cell axon formation. Also phosphorylates SESN2 and SQSTM1 to regulate autophagy. Phosphorylates FLCN, promoting autophagy. Phosphorylates AMBRA1 in response to autophagy induction, releasing AMBRA1 from the cytoskeletal docking site to induce autophagosome nucleation. Phosphorylates ATG4B, leading to inhibit autophagy by decreasing both proteolytic activation and delipidation activities of ATG4B. This is Serine/threonine-protein kinase ULK1 (Ulk1) from Mus musculus (Mouse).